The sequence spans 631 residues: uncharacterized protein (631 aa).

A run of 9 helical transmembrane segments spans residues 42-62 (VLVG…IGGF), 76-96 (ALKL…GTLL), 106-128 (VLGL…GPAP), 152-172 (AGLT…GWLW), 344-364 (ALKY…FGFA), 366-386 (SYWI…VFTL), 398-418 (IGVI…YIAF), 429-449 (MLIV…ALVI), and 464-484 (IARL…TMLL).

It belongs to the YccS/YhfK family.

Its subcellular location is the cell membrane. This is an uncharacterized protein from Bacillus subtilis (strain 168).